The primary structure comprises 492 residues: MKQKCVLIITDGIGYNKNSKFNAFEAAKKPSYEKLFKEVPNSLLKTSGLAVGLPEGQMGNSEVGHMCIGSGRIIYQNLVRINKAIENKELEKNENLKKLLAKCKRVHIIGLYSDGGVHSMDTHFKAMLEICAKNGNEVFAHAITDGRDVSPKSGLNFIKDLKEFCENLGVHFATLCGRFYAMDRDKRWDRVKEYYECLLGKAYKVPNLLEYLQKSYDENVTDEFIKAAQNENYKGMREEDGIIFINFRNDRMKQLVEVLNSKDFKEFEREKIFENLLTMSVYDDKFKLPVLFEKEKIENTLAQVISKAGLSQLHTAETEKYAHVTFFFNGGKEELLENETRVLIPSPKVKTYDEKPQMSAFEVCDAVKKGIEKGEDFIVVNFANGDMVGHTGDFNATIKAVEAVDTCLGEILECAKKHDYAFIITSDHGNCEAMQDEKGNLLTNHTTFDVFVFVQARGVSKIKDNMGLSNIAASVLKILDLEIPKEMNEALF.

Residues aspartate 11 and serine 61 each contribute to the Mn(2+) site. The active-site Phosphoserine intermediate is the serine 61. Substrate contacts are provided by residues histidine 118, 147–148 (RD), arginine 178, arginine 184, 248–251 (RNDR), and lysine 320. Mn(2+) is bound by residues aspartate 386, histidine 390, aspartate 427, histidine 428, and histidine 445.

The protein belongs to the BPG-independent phosphoglycerate mutase family. In terms of assembly, monomer. The cofactor is Mn(2+).

The catalysed reaction is (2R)-2-phosphoglycerate = (2R)-3-phosphoglycerate. It participates in carbohydrate degradation; glycolysis; pyruvate from D-glyceraldehyde 3-phosphate: step 3/5. In terms of biological role, catalyzes the interconversion of 2-phosphoglycerate and 3-phosphoglycerate. In Campylobacter jejuni subsp. jejuni serotype O:2 (strain ATCC 700819 / NCTC 11168), this protein is 2,3-bisphosphoglycerate-independent phosphoglycerate mutase.